We begin with the raw amino-acid sequence, 355 residues long: Probable dual-specificity RNA methyltransferase RlmN 1 (355 aa).

E91 functions as the Proton acceptor in the catalytic mechanism. Residues 99-336 (RADRAAGCLS…THLRRSRGPD (238 aa)) enclose the Radical SAM core domain. Cysteines 106 and 341 form a disulfide. [4Fe-4S] cluster is bound by residues C113, C117, and C120. S-adenosyl-L-methionine contacts are provided by residues 163 to 164 (GE), S195, 218 to 220 (SLH), and N294. C341 serves as the catalytic S-methylcysteine intermediate.

This sequence belongs to the radical SAM superfamily. RlmN family. The cofactor is [4Fe-4S] cluster.

It is found in the cytoplasm. The enzyme catalyses adenosine(2503) in 23S rRNA + 2 reduced [2Fe-2S]-[ferredoxin] + 2 S-adenosyl-L-methionine = 2-methyladenosine(2503) in 23S rRNA + 5'-deoxyadenosine + L-methionine + 2 oxidized [2Fe-2S]-[ferredoxin] + S-adenosyl-L-homocysteine. The catalysed reaction is adenosine(37) in tRNA + 2 reduced [2Fe-2S]-[ferredoxin] + 2 S-adenosyl-L-methionine = 2-methyladenosine(37) in tRNA + 5'-deoxyadenosine + L-methionine + 2 oxidized [2Fe-2S]-[ferredoxin] + S-adenosyl-L-homocysteine. Its function is as follows. Specifically methylates position 2 of adenine 2503 in 23S rRNA and position 2 of adenine 37 in tRNAs. In Opitutus terrae (strain DSM 11246 / JCM 15787 / PB90-1), this protein is Probable dual-specificity RNA methyltransferase RlmN 1.